Consider the following 46-residue polypeptide: TTCCPSIVARSNFNVCRLPGTPEALCATYTGCIIIPGATCPGDYAN.

3 disulfide bridges follow: Cys3–Cys40, Cys4–Cys32, and Cys16–Cys26.

The protein belongs to the plant thionin (TC 1.C.44) family.

It is found in the secreted. Functionally, the function of this hydrophobic plant seed protein is not known. This is Crambin (THI2) from Crambe hispanica subsp. abyssinica (Abyssinian kale).